The following is a 170-amino-acid chain: Probable chemoreceptor glutamine deamidase CheD (170 aa).

The protein belongs to the CheD family.

It catalyses the reaction L-glutaminyl-[protein] + H2O = L-glutamyl-[protein] + NH4(+). In terms of biological role, probably deamidates glutamine residues to glutamate on methyl-accepting chemotaxis receptors (MCPs), playing an important role in chemotaxis. This Maridesulfovibrio salexigens (strain ATCC 14822 / DSM 2638 / NCIMB 8403 / VKM B-1763) (Desulfovibrio salexigens) protein is Probable chemoreceptor glutamine deamidase CheD.